The primary structure comprises 793 residues: Nuclear cap-binding protein subunit 1 (793 aa).

Positions 28–242 (EKKLQEVIGK…SLSAQIENLR (215 aa)) constitute an MIF4G domain.

The protein belongs to the NCBP1 family. Component of the nuclear cap-binding complex (CBC), a heterodimer composed of ncbp-1 and ncbp-1 that interacts with m7GpppG-capped RNA.

The protein localises to the nucleus. In terms of biological role, component of the cap-binding complex (CBC), which binds cotranscriptionally to the 5'-cap of pre-mRNAs and is involved in various processes such as pre-mRNA splicing and RNA-mediated gene silencing (RNAi). The CBC complex is involved in miRNA-mediated RNA interference and is required for primary microRNAs (miRNAs) processing. In the CBC complex, ncbp-1 does not bind directly capped RNAs (m7GpppG-capped RNA) but is required to stabilize the movement of the N-terminal loop of ncbp-2 and lock the CBC into a high affinity cap-binding state with the cap structure. The chain is Nuclear cap-binding protein subunit 1 (ncbp-1) from Caenorhabditis briggsae.